The following is a 295-amino-acid chain: Putative enoyl reductase C646.07c (295 aa).

Over 1–84 (MSITLSSRGR…KDLGPQIGWR (84 aa)) the chain is Cytoplasmic. Residues 85-105 (TVFMIEYLGPLVIHLFFILNY) traverse the membrane as a helical segment. The Lumenal portion of the chain corresponds to 106 to 157 (KWIYRKDYNLCLNQKIAFVLVMLHFMKREYESIFVHRFSLATMPLRNIFKNC). The helical transmembrane segment at 158–178 (AHYHLLSGLFLAYFIYGPWHA) threads the bilayer. Residues 179 to 186 (NDYIKPNH) lie on the Cytoplasmic side of the membrane. A helical transmembrane segment spans residues 187-207 (LLFLIVGWAFAVLSNFRTHII). At 208–223 (LRDLRPAGSKKRVIPT) the chain is on the lumenal side. A helical membrane pass occupies residues 224–246 (GYGFNLVSFPNYFFESLGWLFFA). The Cytoplasmic portion of the chain corresponds to 247–250 (LLTK). The chain crosses the membrane as a helical span at residues 251–268 (SWASWIFLFVGSAQMFVW). Topologically, residues 269–295 (AKKKHARYLKEFPNYPRSRKIMIPFFL) are lumenal.

This sequence belongs to the steroid 5-alpha reductase family.

The protein resides in the endoplasmic reticulum membrane. It carries out the reaction a (2E)-enoyl-CoA + NADPH + H(+) = a 2,3-saturated acyl-CoA + NADP(+). The protein is Putative enoyl reductase C646.07c of Schizosaccharomyces pombe (strain 972 / ATCC 24843) (Fission yeast).